We begin with the raw amino-acid sequence, 446 residues long: DDB1- and CUL4-associated factor 12 (446 aa).

Residues 1 to 12 (MTRRAVSRKRRA) show a composition bias toward basic residues. A disordered region spans residues 1–33 (MTRRAVSRKRRAAPGTGPGEQSDWDHSAHKRKR). 4 WD repeats span residues 132–173 (SHQS…PVCV), 177–215 (GHND…LSKS), 245–284 (PVNC…AKLL), and 333–370 (EQGS…FLED).

It belongs to the WD repeat DCAF12 family. Component of the DCX(DCAF12) E3 ubiquitin ligase complex, at least composed of cul4 (cul4a or cul4b), ddb1, dcaf12 and rbx1.

It is found in the cytoplasm. The protein resides in the cytoskeleton. The protein localises to the microtubule organizing center. Its subcellular location is the centrosome. It localises to the nucleus. It participates in protein modification; protein ubiquitination. Its function is as follows. Substrate-recognition component of a DCX (DDB1-CUL4-X-box) E3 ubiquitin-protein ligase complex of the DesCEND (destruction via C-end degrons) pathway, which recognizes a C-degron located at the extreme C terminus of target proteins, leading to their ubiquitination and degradation. The C-degron recognized by the DesCEND pathway is usually a motif of less than ten residues and can be present in full-length proteins, truncated proteins or proteolytically cleaved forms. The DCX(DCAF12) complex specifically recognizes proteins with a diglutamate (Glu-Glu) at the C-terminus leading to their ubiquitination and degradation. Also directly recognizes the C-terminal glutamate-leucine (Glu-Leu) degron as an alternative degron in proteins leading to their ubiquitination and degradation. This Xenopus tropicalis (Western clawed frog) protein is DDB1- and CUL4-associated factor 12.